Here is a 158-residue protein sequence, read N- to C-terminus: Ribonuclease H (158 aa).

The RNase H type-1 domain occupies 2 to 143 (PEKIIELFTD…VDALLNRVMD (142 aa)). Residues Asp11, Glu49, Asp71, and Asp135 each coordinate Mg(2+).

This sequence belongs to the RNase H family. As to quaternary structure, monomer. Mg(2+) is required as a cofactor.

It is found in the cytoplasm. The enzyme catalyses Endonucleolytic cleavage to 5'-phosphomonoester.. Endonuclease that specifically degrades the RNA of RNA-DNA hybrids. The sequence is that of Ribonuclease H from Acidithiobacillus ferrooxidans (strain ATCC 23270 / DSM 14882 / CIP 104768 / NCIMB 8455) (Ferrobacillus ferrooxidans (strain ATCC 23270)).